The sequence spans 261 residues: Thiazole synthase (261 aa).

Lys102 acts as the Schiff-base intermediate with DXP in catalysis. 1-deoxy-D-xylulose 5-phosphate-binding positions include Gly163, 189-190 (AG), and 211-212 (NT).

Belongs to the ThiG family. In terms of assembly, homotetramer. Forms heterodimers with either ThiH or ThiS.

It localises to the cytoplasm. The enzyme catalyses [ThiS sulfur-carrier protein]-C-terminal-Gly-aminoethanethioate + 2-iminoacetate + 1-deoxy-D-xylulose 5-phosphate = [ThiS sulfur-carrier protein]-C-terminal Gly-Gly + 2-[(2R,5Z)-2-carboxy-4-methylthiazol-5(2H)-ylidene]ethyl phosphate + 2 H2O + H(+). Its pathway is cofactor biosynthesis; thiamine diphosphate biosynthesis. Its function is as follows. Catalyzes the rearrangement of 1-deoxy-D-xylulose 5-phosphate (DXP) to produce the thiazole phosphate moiety of thiamine. Sulfur is provided by the thiocarboxylate moiety of the carrier protein ThiS. In vitro, sulfur can be provided by H(2)S. This is Thiazole synthase from Myxococcus xanthus (strain DK1622).